A 382-amino-acid polypeptide reads, in one-letter code: Dual-specificity RNA methyltransferase RlmN (382 aa).

Catalysis depends on glutamate 95, which acts as the Proton acceptor. A Radical SAM core domain is found at 101 to 349; sequence EETRGTLCVS…TTVRKTRGDD (249 aa). Cysteine 108 and cysteine 354 are oxidised to a cystine. Cysteine 115, cysteine 119, and cysteine 122 together coordinate [4Fe-4S] cluster. Residues 180–181, serine 212, 234–236, and asparagine 311 each bind S-adenosyl-L-methionine; these read GE and SLH. Cysteine 354 (S-methylcysteine intermediate) is an active-site residue.

The protein belongs to the radical SAM superfamily. RlmN family. Requires [4Fe-4S] cluster as cofactor.

The protein resides in the cytoplasm. The catalysed reaction is adenosine(2503) in 23S rRNA + 2 reduced [2Fe-2S]-[ferredoxin] + 2 S-adenosyl-L-methionine = 2-methyladenosine(2503) in 23S rRNA + 5'-deoxyadenosine + L-methionine + 2 oxidized [2Fe-2S]-[ferredoxin] + S-adenosyl-L-homocysteine. It carries out the reaction adenosine(37) in tRNA + 2 reduced [2Fe-2S]-[ferredoxin] + 2 S-adenosyl-L-methionine = 2-methyladenosine(37) in tRNA + 5'-deoxyadenosine + L-methionine + 2 oxidized [2Fe-2S]-[ferredoxin] + S-adenosyl-L-homocysteine. In terms of biological role, specifically methylates position 2 of adenine 2503 in 23S rRNA and position 2 of adenine 37 in tRNAs. m2A2503 modification seems to play a crucial role in the proofreading step occurring at the peptidyl transferase center and thus would serve to optimize ribosomal fidelity. This Paraburkholderia phymatum (strain DSM 17167 / CIP 108236 / LMG 21445 / STM815) (Burkholderia phymatum) protein is Dual-specificity RNA methyltransferase RlmN.